Consider the following 379-residue polypeptide: Lipid-A-disaccharide synthase (379 aa).

Belongs to the LpxB family.

It carries out the reaction a lipid X + a UDP-2-N,3-O-bis[(3R)-3-hydroxyacyl]-alpha-D-glucosamine = a lipid A disaccharide + UDP + H(+). The protein operates within bacterial outer membrane biogenesis; LPS lipid A biosynthesis. In terms of biological role, condensation of UDP-2,3-diacylglucosamine and 2,3-diacylglucosamine-1-phosphate to form lipid A disaccharide, a precursor of lipid A, a phosphorylated glycolipid that anchors the lipopolysaccharide to the outer membrane of the cell. This is Lipid-A-disaccharide synthase from Vibrio parahaemolyticus serotype O3:K6 (strain RIMD 2210633).